The following is a 229-amino-acid chain: 3-beta-hydroxysteroid-Delta(8),Delta(7)-isomerase (229 aa).

Helical transmembrane passes span 30–50, 67–87, 119–139, and 186–206; these read WYIVTVLFTVFGALVVTMWLL, VCWFAVCAFVHLVIEGWFVLY, IICMESITVVLWGPLSLWAVI, and FWFYFFFMNVLWLVIPGVLFF. The region spanning 62–205 is the EXPERA domain; sequence WRRLSVCWFA…LWLVIPGVLF (144 aa).

This sequence belongs to the EBP family. Highly expressed in liver, bowel, adrenal gland, testis, ovary, and uterus and less expressed in brain, cerebellum, skeletal muscle, and heart.

Its subcellular location is the endoplasmic reticulum membrane. It is found in the nucleus envelope. The protein resides in the cytoplasmic vesicle. It carries out the reaction lathosterol = 5alpha-cholest-8-en-3beta-ol. It catalyses the reaction zymosterol = 5alpha-cholesta-7,24-dien-3beta-ol. The enzyme catalyses 5,6alpha-epoxy-5alpha-cholestan-3beta-ol + H2O = 5alpha-cholestane-3beta,5,6beta-triol. The catalysed reaction is 5,6beta-epoxy-5beta-cholestan-3beta-ol + H2O = 5alpha-cholestane-3beta,5,6beta-triol. Its pathway is steroid biosynthesis; cholesterol biosynthesis. Its function is as follows. Isomerase that catalyzes the conversion of Delta(8)-sterols to their corresponding Delta(7)-isomers. Functionally, component of the microsomal antiestrogen binding site (AEBS), a multiproteic complex at the ER membrane that consists of an association between EBP and 7-dehydrocholesterol reductase/DHCR7. This complex is responsible for cholesterol-5,6-epoxide hydrolase (ChEH) activity, which consists in the hydration of cholesterol-5,6-epoxides (5,6-EC) into cholestane-3beta,5alpha,6beta-triol (CT). The precise role of each component of this complex has not been described yet. The chain is 3-beta-hydroxysteroid-Delta(8),Delta(7)-isomerase (EBP) from Cavia porcellus (Guinea pig).